Here is a 358-residue protein sequence, read N- to C-terminus: UPF0575 protein C19orf67 (358 aa).

The interval 1-84 (MATEQWFEGS…PGPAPPRLSL (84 aa)) is disordered. Composition is skewed to pro residues over residues 17-32 (ETPP…PPCG) and 70-80 (PLVPRPGPAPP).

It belongs to the UPF0575 family.

The protein is UPF0575 protein C19orf67 (C19orf67) of Homo sapiens (Human).